The following is a 286-amino-acid chain: Meiotically up-regulated gene 64 protein (286 aa).

It localises to the cytoplasm. Functionally, has a role in meiosis. The sequence is that of Meiotically up-regulated gene 64 protein (mug64) from Schizosaccharomyces pombe (strain 972 / ATCC 24843) (Fission yeast).